Reading from the N-terminus, the 107-residue chain is Putative double-stranded DNA mimic protein CGSHiGG_01135 (107 aa).

Belongs to the putative dsDNA mimic protein family.

In terms of biological role, may act as a double-stranded DNA (dsDNA) mimic. Probably regulates the activity of a dsDNA-binding protein. In Haemophilus influenzae (strain PittGG), this protein is Putative double-stranded DNA mimic protein CGSHiGG_01135.